Consider the following 680-residue polypeptide: MALDKLDLYVIITLVVAIAAYFAKNQFLDQQQDTGFLNTDSGDGNSRDILQALKKNNKNTLLLFGSQTGTAEDYANKLSRELHSRFGLKTMVADFADYDFENFGDITEDILVFFIVATYGEGEPTDNADEFHTWLTEEADTLSTLKYTVFGLGNSTYEFFNAIGRKFDRLLGEKGGDRFAEYGEGDDGTGTLDEDFLAWKDNVFDSLKNDLNFEEKELKYEPNVKLTERDDLSGNDPDVSLGEPNVKYIKSEGVDLTKGPFDHTHPFLARIVKTKELFTSEDRHCVHVEFDISESNLKYTTGDHLAIWPSNSDENIKQFAKCFGLEDKLDTVIELKALDSTYSIPFPNPITYGAVIRHHLEISGPVSRQFFLSIAGFAPDEETKKSFTRIGGDKQEFASKVTRRKFNIADALLFASNNRPWSDVPFEFLIENVQHLTPRYYSISSSSLSEKQTINVTAVVEAEEEADGRPVTGVVTNLLKNIEIEQNKTGETPMVHYDLNGPRGKFSKFRLPVHVRRSNFKLPKNSTTPVILIGPGTGVAPLRGFVRERVQQVKNGVNVGKTVLFYGCRNSEQDFLYKQEWSEYASVLGENFEMFNAFSRQDPTKKVYVQDKILENSALVDELLSSGAIIYVCGDASRMARDVQAAIAKIVAKSRDIHEDKAAELVKSWKVQNRYQEDVW.

Topologically, residues 1-5 are lumenal; it reads MALDK. A helical transmembrane segment spans residues 6 to 23; the sequence is LDLYVIITLVVAIAAYFA. The Cytoplasmic portion of the chain corresponds to 24 to 680; it reads KNQFLDQQQD…VQNRYQEDVW (657 aa). Residues 60–204 form the Flavodoxin-like domain; sequence TLLLFGSQTG…DFLAWKDNVF (145 aa). Residues 66 to 71, 117 to 120, 152 to 161, and Asp-187 contribute to the FMN site; these read SQTGTA, ATYG, and LGNSTYEFFN. The FAD-binding FR-type domain maps to 264 to 509; sequence THPFLARIVK…NGPRGKFSKF (246 aa). Arg-283 is an NADP(+) binding site. FAD contacts are provided by residues 439–442, 457–459, and 473–476; these read RYYS, TAV, and GVVT. NADP(+)-binding positions include Thr-537, 599 to 600, 606 to 610, and Asp-642; these read SR and KVYVQ. Trp-680 contributes to the FAD binding site.

The protein belongs to the NADPH--cytochrome P450 reductase family. In the N-terminal section; belongs to the flavodoxin family. This sequence in the C-terminal section; belongs to the flavoprotein pyridine nucleotide cytochrome reductase family. FAD is required as a cofactor. FMN serves as cofactor.

The protein resides in the endoplasmic reticulum membrane. Its subcellular location is the mitochondrion outer membrane. The protein localises to the cell membrane. It carries out the reaction 2 oxidized [cytochrome P450] + NADPH = 2 reduced [cytochrome P450] + NADP(+) + H(+). This enzyme is required for electron transfer from NADP to cytochrome P450 in microsomes. It can also provide electron transfer to heme oxygenase and cytochrome B5. Involved in ergosterol biosynthesis. This Candida tropicalis (Yeast) protein is NADPH--cytochrome P450 reductase.